The primary structure comprises 26 residues: Aralin B chain (26 aa).

In terms of assembly, disulfide-linked dimer of A and B chains. Post-translationally, glycosylated. High-mannose type oligosaccharides.

Its function is as follows. Lectin specific for galactose (Gal) and its derivatives. Induces apoptosis. Has cytotoxic activity against several human cancer cell lines. Is less cytotoxic to normal human cells. The polypeptide is Aralin B chain (Aralia elata (Japanese angelica tree)).